The following is a 1578-amino-acid chain: Neurexin-3 (1578 aa).

An N-terminal signal peptide occupies residues 1-27 (MSFTLHSVFFTLKVSSFLGSLVGLCLG). A Laminin G-like 1 domain is found at 28 to 202 (LEFMGLPNQW…SVQLEAEGPC (175 aa)). Residues 28–1503 (LEFMGLPNQW…EVIRESNSTT (1476 aa)) are Extracellular-facing. N-linked (GlcNAc...) asparagine glycans are attached at residues Asn58 and Asn105. One can recognise an EGF-like 1 domain in the interval 198 to 235 (AEGPCGERPCENGGICFLLDGHPTCDCSTTGYGGTLCS). 3 disulfides stabilise this stretch: Cys202–Cys213, Cys207–Cys222, and Cys224–Cys234. 2 consecutive Laminin G-like domains span residues 260–444 (ENVA…VFKC) and 451–643 (DPIN…KSSC). Asp308, Leu325, and Met378 together coordinate Ca(2+). Intrachain disulfides connect Cys408–Cys444, Cys614–Cys643, Cys651–Cys662, Cys656–Cys671, and Cys673–Cys683. Residues 647–684 (SAKQCDSYPCKNNAVCKDGWNRFICDCTGTGYWGRTCE) form the EGF-like 2 domain. Laminin G-like domains follow at residues 689–861 (ILSY…IDYC) and 875–1050 (DPVT…DRGC). Ca(2+)-binding residues include Asp736 and Leu753. Asn761 carries an N-linked (GlcNAc...) asparagine glycan. Ca(2+) is bound at residue Arg811. 4 cysteine pairs are disulfide-bonded: Cys1022–Cys1050, Cys1057–Cys1068, Cys1062–Cys1077, and Cys1079–Cys1089. The region spanning 1053 to 1090 (PSTTCQEDSCANQGVCMQQWEGFTCDCSMTSYSGNQCN) is the EGF-like 3 domain. The 201-residue stretch at 1094–1294 (ATYIFGKSGG…NPNIKINGSV (201 aa)) folds into the Laminin G-like 6 domain. Asp1146 and Ile1163 together coordinate Ca(2+). Residue Asn1193 is glycosylated (N-linked (GlcNAc...) asparagine). 2 residues coordinate Ca(2+): Ile1245 and Asn1247. Asn1291 and Asn1335 each carry an N-linked (GlcNAc...) asparagine glycan. A disordered region spans residues 1328–1352 (ATTTTRKNRSTASIQPTSDDLVSSA). The segment covering 1337–1352 (STASIQPTSDDLVSSA) has biased composition (polar residues). The O-linked (Xyl...) (heparan sulfate) serine glycan is linked to Ser1351. An N-linked (GlcNAc...) asparagine glycan is attached at Asn1500. Residues 1504–1524 (GMVVGIVAAAALCILILLYAM) traverse the membrane as a helical segment. At 1525–1578 (YKYRNRDEGSYQVDETRNYISNSAQSNGTLMKEKQASSKSGHKKQKNKDKEYYV) the chain is on the cytoplasmic side. The tract at residues 1546–1578 (NSAQSNGTLMKEKQASSKSGHKKQKNKDKEYYV) is disordered.

Belongs to the neurexin family. The laminin G-like domain 2 binds to NXPH1. Isoform 8/alpha-4B binds to alpha-dystroglycan. The cytoplasmic C-terminal region binds to CASK. Specific isoforms bind neuroligins NLGN1, NLGN2 and NLGN3. Interacts with CLSTN3. In terms of processing, O-glycosylated; contains heparan sulfate. Heparan sulfate attachment is required for synapse development by mediating interactions with neuroligins. As to expression, brain.

It is found in the presynaptic cell membrane. Functionally, neuronal cell surface protein that may be involved in cell recognition and cell adhesion. May mediate intracellular signaling. The chain is Neurexin-3 (Nrxn3) from Rattus norvegicus (Rat).